Consider the following 307-residue polypeptide: Glutaminase (307 aa).

Positions 66, 116, 160, 167, 191, 243, and 261 each coordinate substrate.

The protein belongs to the glutaminase family. Homotetramer.

It catalyses the reaction L-glutamine + H2O = L-glutamate + NH4(+). The sequence is that of Glutaminase from Saccharophagus degradans (strain 2-40 / ATCC 43961 / DSM 17024).